Here is a 90-residue protein sequence, read N- to C-terminus: Large ribosomal subunit protein bL27 (90 aa).

It belongs to the bacterial ribosomal protein bL27 family.

The chain is Large ribosomal subunit protein bL27 from Rhodopseudomonas palustris (strain BisB5).